A 186-amino-acid chain; its full sequence is MDTFSTKSLALQAQKKVLSKMASKAMVAVFVDNTSSEVLDELYQATKEFTRSRKEAQRVVKNLVKVAVKLAVLLRADQLDSNELAQLQRFRGRVRSLAMTALSFHQVDFTFDRRVLATGLLECRDLLHQAIGPHLTAKSHGRINHIFSHFANGDFLAALYSPAEPYRSHLCRICDGLGRMLDEGGI.

This sequence belongs to the TNFAIP8 family. Interacts with FBXW5; TNFAIP8L1 competes with TSC2 to bind FBXW5 increasing TSC2 stability by preventing its ubiquitination. As to expression, detected in wide variety tissues, such as neurons in brain, hepatocytes, germ cells of female and male reproductive organs, muscular tissues and variety types of cells of the epithelial origin (at protein level).

The protein localises to the cytoplasm. Acts as a negative regulator of mTOR activity. The polypeptide is Tumor necrosis factor alpha-induced protein 8-like protein 1 (Tnfaip8l1) (Mus musculus (Mouse)).